A 111-amino-acid polypeptide reads, in one-letter code: Cytochrome c2 (111 aa).

C14, C17, H18, and M83 together coordinate heme c.

Belongs to the cytochrome c family. Post-translationally, binds 1 heme c group covalently per subunit.

Its function is as follows. Cytochrome c2 is found mainly in purple, non-sulfur, photosynthetic bacteria where it functions as the electron donor to the oxidized bacteriochlorophyll in the photophosphorylation pathway. However, it may also have a role in the respiratory chain and is found in some non-photosynthetic bacteria. This is Cytochrome c2 from Agrobacterium tumefaciens (strain II Chrys).